A 6684-amino-acid polypeptide reads, in one-letter code: Replicase polyprotein 1ab (6684 aa).

One can recognise a CoV Nsp1 globular domain in the interval 2-108 (SSKQFKILVN…DFDLKIARTG (107 aa)). Residues 111 to 349 (AIYVDQYMCG…KSLVACSVKR (239 aa)) enclose the CoV Nsp2 N-terminal domain. 4 residues coordinate Zn(2+): Cys-240, Cys-242, Cys-259, and Cys-260. Residues 240-260 (CPCGSESSGVGDWTGFKTACC) are C4. Residues 378–773 (NVGLLFKKTP…CNAARNDIEI (396 aa)) form the CoV Nsp2 middle domain. The region spanning 768–879 (RNDIEIGGIP…VQRMYNKMGG (112 aa)) is the CoV Nsp2 C-terminal domain. One can recognise a Ubiquitin-like 1 domain in the interval 882 to 983 (KTVSFSEEVD…DGIMISQYDI (102 aa)). Positions 989-1032 (EKSEVSASSEEEEVESVEEDPENEIVEASEGAEGTSSQEEVETV) are disordered. The span at 997–1015 (SEEEEVESVEEDPENEIVE) shows a compositional bias: acidic residues. Residues 1055-1299 (PWAAAVDVQE…FKVEKVEQQP (245 aa)) form the Peptidase C16 1 domain. Cys-1093 functions as the For PL1-PRO activity in the catalytic mechanism. The C4-type 1; degenerate zinc finger occupies 1164-1195 (CGCGEKEIVLERAVFKLTPLKESFNYGVCGDC). Active-site for PL1-PRO activity residues include His-1244 and Asp-1257. Residues 1318–1489 (NDDLILPFYK…TIENFFSCSI (172 aa)) form the Macro domain. A Ubiquitin-like 2 domain is found at 1486 to 1542 (SCSIPVNVTEDNVNHERVSVSFDKTYGEQLKGTVVIKDKDVTNQLPSAFDVGQKVIK). The region spanning 1550–1803 (AHYGFRDAAA…KVAASPKIVQ (254 aa)) is the Peptidase C16 2 domain. Cys-1588 (for PL2-PRO activity) is an active-site residue. Zn(2+)-binding residues include Cys-1667, Cys-1670, Cys-1694, and His-1696. The C4-type 2; atypical zinc-finger motif lies at 1667-1696 (CDKCAKVEKFVGPVVAAPLAIHGTDETCVH). Catalysis depends on for PL2-PRO activity residues His-1741 and Asp-1754. Residues 1896 to 1916 (LVLLLIAIYNFFYLFVSIPVV) form a helical membrane-spanning segment. The tract at residues 1896 to 2053 (LVLLLIAIYN…LALKHIVFAC (158 aa)) is HD1. Residues 1905-1970 (NFFYLFVSIP…LQVTWDFKSD (66 aa)) form the 3Ecto domain. 2 disulfides stabilise this stretch: Cys-1921-Cys-1948 and Cys-1939-Cys-1945. A run of 2 helical transmembrane segments spans residues 1995-2015 (CFLMYFVSQYLNLWLSYFGYV) and 2033-2053 (FVIVVIVVKAVLALKHIVFAC). A Y1 region spans residues 2044-2134 (LALKHIVFAC…SVKQTVYATD (91 aa)). One can recognise a CoV Nsp3 Y domain in the interval 2044-2384 (LALKHIVFAC…PYERFTESVS (341 aa)). His-2048, Cys-2053, Cys-2058, Cys-2061, Cys-2094, His-2097, Cys-2101, and Cys-2104 together coordinate Zn(2+). The tract at residues 2048 to 2061 (HIVFACSNPSCKTC) is ZF1. A ZF2 region spans residues 2094–2104 (CKKHNFYCKNC). The interval 2135 to 2224 (RSHQEVTKVE…IVNSDLLEDL (90 aa)) is Y2. A coV-Y region spans residues 2135 to 2384 (RSHQEVTKVE…PYERFTESVS (250 aa)). The tract at residues 2225–2281 (SVDFKGALFNAKKNVIKNSFNVDVSECKNLDECYRACNLNVSFSTFEMAVNNAHRFG) is Y3. Residues 2282 to 2384 (ILITDRSFNN…PYERFTESVS (103 aa)) form a Y4 region. 8 helical membrane passes run 2401–2421 (IVILVFVFIFICGLCSVYSVA), 2467–2487 (YGFIPTFGKSCPIVVGTVFDL), 2497–2517 (PAYVSIVGRSLVFAINAAFGV), 2538–2558 (CVFNTACTTLTGLGGTIVYCA), 2666–2686 (GAMLVNIIIACLAIAMCYGVL), 2695–2715 (CTFLIVMIIVTLVVNNVSYFV), 2721–2741 (FMIIYAIVYYFITRKLAYPGI), and 2746–2766 (FIIAYINMAPWYVITAYILVF). The segment at 2401–2766 (IVILVFVFIF…YVITAYILVF (366 aa)) is HD2. The Nsp4C domain occupies 2783-2878 (LFEGDKFVGN…PTVSVNSTLQ (96 aa)). Positions 2879 to 3180 (SGLRKMAQPS…IRQMYGVNLQ (302 aa)) constitute a Peptidase C30 domain. Residues His-2919 and Cys-3022 each act as for 3CL-PRO activity in the active site. 8 helical membrane passes run 3187-3207 (FFYPIMTAMTILFAFWLEFFM), 3217-3237 (TFVSIVLAVTTLISTVFVSGI), 3242-3262 (LFFMSFVLPSVILVTAHNLFW), 3280-3300 (MFLPVDMQGVMLTVFCFIVFV), 3313-3333 (WFSLAVTTILVIFNMVKIFGT), 3347-3367 (FVNMLTMIVSLTTKDWMVVIA), 3371-3391 (IAYYIVVCVMPSAFVSDFGFM), and 3394-3414 (ISIVYMACGYLFCCYYGILYW). The HD3 stretch occupies residues 3187–3414 (FFYPIMTAMT…FCCYYGILYW (228 aa)). Residues 3475–3557 (SKLTEMKCTN…SYFENTTILQ (83 aa)) enclose the RdRp Nsp7 cofactor domain. The region spanning 3558-3752 (SVASAYAALP…ITCERTTKLQ (195 aa)) is the RdRp Nsp8 cofactor domain. A Nsp9 ssRNA-binding domain is found at 3753–3863 (NNEIMPGKLK…GYIGATVRLQ (111 aa)). The ExoN/MTase coactivator domain maps to 3864–4004 (AGKPTEHPSN…TSMQSFTVDQ (141 aa)). Residues Cys-3937, Cys-3940, His-3946, Cys-3953, Cys-3979, Cys-3982, Cys-3990, and Cys-3992 each contribute to the Zn(2+) site. Zinc fingers lie at residues 3937–3953 (CIYCRCHVEHPAIDGLC) and 3979–3992 (CVVCGCWLNNGCMC). The 250-residue stretch at 4006–4255 (YLNRVRGSSA…ESENFVKSDI (250 aa)) folds into the NiRAN domain. The Nsp12 Interface domain occupies 4261-4359 (KQYDLLAYDF…WNLDVKLDTM (99 aa)). Residues His-4290, Cys-4296, Cys-4301, Cys-4305, and Cys-4482 each coordinate Zn(2+). The 568-residue stretch at 4360-4927 (KLSMTDLLRF…SLYEKSTVLQ (568 aa)) folds into the Nsp12 RNA-dependent RNA polymerase domain. The interval 4362–4576 (SMTDLLRFVT…HQKHLKSIAA (215 aa)) is rdRp Fingers N-ter. Residues 4577–4615 (TRNATVVIGSTKFYGGWDNMLKNLMRDVDNGCLMGWDYP) form a rdRp Palm N-ter region. The RdRp catalytic domain maps to 4607-4769 (GCLMGWDYPK…CYNKDYADLG (163 aa)). A rdRp Fingers C-ter region spans residues 4616–4674 (KCDRALPNMIRMASAMILGSKHVGCCTHNDRFYRLSNELAQVLTEVVHCTGGFYFKPGG). Zn(2+) is bound by residues His-4637, Cys-4640, and Cys-4641. Residues 4675-4810 (TTSGDGTTAY…SVGPHEFCSQ (136 aa)) are rdRp Palm C-ter. Residues Ser-4754, Asp-4755, and Asp-4756 contribute to the active site. A rdRp Thumb region spans residues 4811-4927 (HTLQIVGPDG…SLYEKSTVLQ (117 aa)). One can recognise a CV ZBD domain in the interval 4928 to 5040 (AAGMCVVCGS…EDFNKLAVSD (113 aa)). Residues Cys-4932, Cys-4935, Cys-4943, Cys-4946, Cys-4953, Cys-4956, His-4960, His-4966, Cys-4977, Cys-4982, Cys-4999, and His-5002 each contribute to the Zn(2+) site. In terms of domain architecture, (+)RNA virus helicase ATP-binding spans 5175–5366 (NTISKLYPVF…MCTLGPDVFL (192 aa)). 5210 to 5217 (GPPGSGKS) is an ATP binding site. One can recognise a (+)RNA virus helicase C-terminal domain in the interval 5367-5536 (HKCYRCPAEI…AKPETCGLFK (170 aa)). The ExoN domain occupies 5598-5812 (LFCTRDFAMR…RCLAIHDCFV (215 aa)). Residues Asp-5616, Glu-5618, and Glu-5717 contribute to the active site. 7 residues coordinate Zn(2+): Cys-5733, Cys-5735, Cys-5751, His-5754, His-5782, Cys-5786, and His-5789. Catalysis depends on residues His-5793 and Asp-5798. Cys-5804 contributes to the Zn(2+) binding site. The N7-MTase domain occupies 5821-6042 (YPFIDNEEKI…MLWHGFVNSK (222 aa)). 5856–5862 (DVGNPKG) contributes to the S-adenosyl-L-methionine binding site. The gpppA-binding stretch occupies residues 5933–5947 (CNGGALYVNNHAFHT). Zn(2+)-binding residues include Cys-5971, Cys-5988, Cys-5999, and His-6002. Positions 6046 to 6106 (SLENVAFNVV…NVAFELYAKR (61 aa)) constitute a Nsp15 N-terminal oligomerization domain. The 118-residue stretch at 6107–6224 (KLGLTPPLTI…IYVRKNGEYV (118 aa)) folds into the AV-Nsp11N/CoV-Nsp15M domain. The NendoU domain occupies 6241 to 6381 (KPRSTMEEDF…ENSHIKTFYP (141 aa)). Active-site residues include His-6271, His-6286, Lys-6327, Lys-6429, Asp-6513, Lys-6553, and Glu-6586. A Nidovirus-type SAM-dependent 2'-O-MTase domain is found at 6385 to 6681 (SAEWNPGYSM…KLLNFGNHFV (297 aa)).

This sequence belongs to the coronaviruses polyprotein 1ab family. As to quaternary structure, 3CL-PRO exists as monomer and homodimer. Eight copies of nsp7 and eight copies of nsp8 assemble to form a heterohexadecamer. Nsp9 is a dimer. Nsp10 forms a dodecamer. Requires Mn(2+) as cofactor. In terms of processing, specific enzymatic cleavages in vivo by its own proteases yield mature proteins. 3CL-PRO is autocatalytically processed.

Its subcellular location is the host membrane. It localises to the host cytoplasm. The protein localises to the host perinuclear region. It is found in the host endoplasmic reticulum-Golgi intermediate compartment. It catalyses the reaction Thiol-dependent hydrolysis of ester, thioester, amide, peptide and isopeptide bonds formed by the C-terminal Gly of ubiquitin (a 76-residue protein attached to proteins as an intracellular targeting signal).. The enzyme catalyses RNA(n) + a ribonucleoside 5'-triphosphate = RNA(n+1) + diphosphate. The catalysed reaction is ATP + H2O = ADP + phosphate + H(+). It carries out the reaction a 5'-end diphospho-ribonucleoside in mRNA + GTP + H(+) = a 5'-end (5'-triphosphoguanosine)-ribonucleoside in mRNA + diphosphate. It catalyses the reaction a 5'-end (N(7)-methyl 5'-triphosphoguanosine)-ribonucleoside in mRNA + S-adenosyl-L-methionine = a 5'-end (N(7)-methyl 5'-triphosphoguanosine)-(2'-O-methyl-ribonucleoside) in mRNA + S-adenosyl-L-homocysteine + H(+). The enzyme catalyses uridylyl-uridylyl-ribonucleotide-RNA = a 3'-end uridylyl-2',3'-cyclophospho-uridine-RNA + a 5'-end dephospho-ribonucleoside-RNA. Functionally, the replicase polyprotein of coronaviruses is a multifunctional protein: it contains the activities necessary for the transcription of negative stranded RNA, leader RNA, subgenomic mRNAs and progeny virion RNA as well as proteinases responsible for the cleavage of the polyprotein into functional products. In terms of biological role, non-structural protein 1 inhibits host translation. By suppressing host gene expression, nsp1 facilitates efficient viral gene expression in infected cells and evasion from host immune response. The papain-like proteinase 1 (PLP1) and papain-like proteinase 2 (PLP2) are responsible for the cleavages located at the N-terminus of the replicase polyprotein. In addition, PLP2 possesses a deubiquitinating/deISGylating activity and processes both 'Lys-48'- and 'Lys-63'-linked polyubiquitin chains from cellular substrates. PLP2 also antagonizes innate immune induction of type I interferon by blocking the nuclear translocation of host IRF-3. Its function is as follows. Responsible for the majority of cleavages as it cleaves the C-terminus of replicase polyprotein at 11 sites. Recognizes substrates containing the core sequence [ILMVF]-Q-|-[SAGC]. Inhibited by the substrate-analog Cbz-Val-Asn-Ser-Thr-Leu-Gln-CMK. Functionally, the helicase which contains a zinc finger structure displays RNA and DNA duplex-unwinding activities with 5' to 3' polarity. ATPase activity is strongly stimulated by poly(U), poly(dT), poly(C), poly(dA), but not by poly(G). In terms of biological role, the exoribonuclease acts on both ssRNA and dsRNA in a 3' to 5' direction. Nsp7-nsp8 hexadecamer may possibly confer processivity to the polymerase, maybe by binding to dsRNA or by producing primers utilized by the latter. Its function is as follows. Forms a primer, NSP9-pU, which is utilized by the polymerase for the initiation of RNA chains. Interacts with ribosome signal recognition particle RNA (SRP). Together with NSP8, suppress protein integration into the cell membrane, thereby disrupting host immune defenses. Functionally, RNA-directed RNA polymerase that catalyzes the transcription of viral genomic and subgenomic RNAs. Acts in complex with nsp7 and nsp8 to transcribe both the minus and positive strands of genomic RNA. The kinase-like NiRAN domain of NSP12 attaches one or more nucleotides to the amino terminus of NSP9, forming a covalent RNA-protein intermediate that serves as transcription/replication primer. Subgenomic RNAs (sgRNAs) are formed by discontinuous transcription: The polymerase has the ability to pause at transcription-regulating sequences (TRS) and jump to the leader TRS, resulting in a major deletion. This creates a series of subgenomic RNAs that are replicated, transcribed and translated. In addition, Nsp12 is a subunit of the viral RNA capping enzyme that catalyzes the RNA guanylyltransferase reaction for genomic and sub-genomic RNAs. Subsequently, the NiRAN domain transfers RNA to GDP, and forms the core cap structure GpppA-RNA. In terms of biological role, plays a role in viral transcription/replication and prevents the simultaneous activation of host cell dsRNA sensors, such as MDA5/IFIH1, OAS, and PKR. Acts by degrading the 5'-polyuridines generated during replication of the poly(A) region of viral genomic and subgenomic RNAs. Catalyzes a two-step reaction in which a 2'3'-cyclic phosphate (2'3'-cP) is first generated by 2'-O transesterification, which is then hydrolyzed to a 3'-phosphate (3'-P). If not degraded, poly(U) RNA would hybridize with poly(A) RNA tails and activate host dsRNA sensors. The polypeptide is Replicase polyprotein 1ab (rep) (Sus scrofa (Pig)).